The sequence spans 315 residues: MAATAVGNDVIDRDLPTAVRLLNSLTEQIVSVTSHVRELIKKVREKAYQTSKGLSFLDLRYHLLLFYLQDITHLISLKTEGESLKDNSAIHRLVTIRTVLEKMRPLDQKLKYQIDKLVRTAVTGSLSENDPLHFRPNPQSLVSKLSESEDSDDDGVGGKTKEQKEPSGGRRYVPPRIAPMHYDGDLTEADRQKERVEKQKRAALRSSVIQELRQQYSDAPEEIRDRRDFQTDRQGREELNRKNYEESMMVRLSTTRDQKLRKRGMMGMTSQLSNITRFSDITALTGGEVQDIGNPKPKKKKIIKKGKKKVFRKRK.

Disordered stretches follow at residues 127 to 201 and 289 to 315; these read SEND…KQKR and VQDI…RKRK. Basic and acidic residues-rich tracts occupy residues 159–168 and 182–200; these read KTKEQKEPSG and YDGD…EKQK. Positions 181–206 form a coiled coil; that stretch reads HYDGDLTEADRQKERVEKQKRAALRS. The span at 296–315 shows a compositional bias: basic residues; sequence KPKKKKIIKKGKKKVFRKRK.

Belongs to the SAS10 family. As to quaternary structure, part of the small subunit (SSU) processome, composed of more than 70 proteins and the RNA chaperone small nucleolar RNA (snoRNA) U3.

Its subcellular location is the nucleus. It localises to the nucleolus. It is found in the chromosome. The protein localises to the centromere. The protein resides in the cytoplasm. Its subcellular location is the cell projection. It localises to the axon. It is found in the dendrite. The protein localises to the filopodium. Its function is as follows. Part of the small subunit (SSU) processome, first precursor of the small eukaryotic ribosomal subunit. During the assembly of the SSU processome in the nucleolus, many ribosome biogenesis factors, an RNA chaperone and ribosomal proteins associate with the nascent pre-rRNA and work in concert to generate RNA folding, modifications, rearrangements and cleavage as well as targeted degradation of pre-ribosomal RNA by the RNA exosome. Its dissociation from the complex determines the transition from state pre-A1 to state pre-A1*. May inhibit mRNA translation. The sequence is that of Neuroguidin (ngdn) from Danio rerio (Zebrafish).